The following is a 222-amino-acid chain: Protein-L-isoaspartate O-methyltransferase (222 aa).

The active site involves S69.

Belongs to the methyltransferase superfamily. L-isoaspartyl/D-aspartyl protein methyltransferase family.

It localises to the cytoplasm. It carries out the reaction [protein]-L-isoaspartate + S-adenosyl-L-methionine = [protein]-L-isoaspartate alpha-methyl ester + S-adenosyl-L-homocysteine. Functionally, catalyzes the methyl esterification of L-isoaspartyl residues in peptides and proteins that result from spontaneous decomposition of normal L-aspartyl and L-asparaginyl residues. It plays a role in the repair and/or degradation of damaged proteins. The protein is Protein-L-isoaspartate O-methyltransferase of Nitrosomonas eutropha (strain DSM 101675 / C91 / Nm57).